Here is a 156-residue protein sequence, read N- to C-terminus: 6,7-dimethyl-8-ribityllumazine synthase (156 aa).

5-amino-6-(D-ribitylamino)uracil-binding positions include Phe-24, 56–58, and 80–82; these read SFE and AVV. 85–86 is a (2S)-2-hydroxy-3-oxobutyl phosphate binding site; that stretch reads ET. His-88 functions as the Proton donor in the catalytic mechanism. Phe-113 is a 5-amino-6-(D-ribitylamino)uracil binding site. (2S)-2-hydroxy-3-oxobutyl phosphate is bound at residue Arg-127.

It belongs to the DMRL synthase family.

It carries out the reaction (2S)-2-hydroxy-3-oxobutyl phosphate + 5-amino-6-(D-ribitylamino)uracil = 6,7-dimethyl-8-(1-D-ribityl)lumazine + phosphate + 2 H2O + H(+). It participates in cofactor biosynthesis; riboflavin biosynthesis; riboflavin from 2-hydroxy-3-oxobutyl phosphate and 5-amino-6-(D-ribitylamino)uracil: step 1/2. Catalyzes the formation of 6,7-dimethyl-8-ribityllumazine by condensation of 5-amino-6-(D-ribitylamino)uracil with 3,4-dihydroxy-2-butanone 4-phosphate. This is the penultimate step in the biosynthesis of riboflavin. This Thermococcus kodakarensis (strain ATCC BAA-918 / JCM 12380 / KOD1) (Pyrococcus kodakaraensis (strain KOD1)) protein is 6,7-dimethyl-8-ribityllumazine synthase.